Reading from the N-terminus, the 252-residue chain is Phosphoglycolate phosphatase (252 aa).

Asp13 serves as the catalytic Nucleophile. Mg(2+)-binding residues include Asp13, Asp15, and Asp192.

It belongs to the HAD-like hydrolase superfamily. CbbY/CbbZ/Gph/YieH family. Monomer. It depends on Mg(2+) as a cofactor. Chloride serves as cofactor.

The enzyme catalyses 2-phosphoglycolate + H2O = glycolate + phosphate. Its pathway is organic acid metabolism; glycolate biosynthesis; glycolate from 2-phosphoglycolate: step 1/1. Functionally, specifically catalyzes the dephosphorylation of 2-phosphoglycolate. Is involved in the dissimilation of the intracellular 2-phosphoglycolate formed during the DNA repair of 3'-phosphoglycolate ends, a major class of DNA lesions induced by oxidative stress. This is Phosphoglycolate phosphatase from Salmonella typhi.